Here is a 125-residue protein sequence, read N- to C-terminus: Glycine cleavage system H protein (125 aa).

The region spanning 23-105 is the Lipoyl-binding domain; that stretch reads VSTVGITEHA…FEGGWLFKVR (83 aa). Position 64 is an N6-lipoyllysine (Lys64).

This sequence belongs to the GcvH family. In terms of assembly, the glycine cleavage system is composed of four proteins: P, T, L and H. (R)-lipoate is required as a cofactor.

Its function is as follows. The glycine cleavage system catalyzes the degradation of glycine. The H protein shuttles the methylamine group of glycine from the P protein to the T protein. The sequence is that of Glycine cleavage system H protein from Streptomyces avermitilis (strain ATCC 31267 / DSM 46492 / JCM 5070 / NBRC 14893 / NCIMB 12804 / NRRL 8165 / MA-4680).